A 215-amino-acid polypeptide reads, in one-letter code: MGKGDPKKPRGKMSSYAFFVQTCREEHKKKHPDASVNFSEFSKKCSERWKTMSAKEKGKFEDMAKADKARYEREMKTYIPPKGETKKKFKDPNAPKRPPSAFFLFCSEYRPKIKGEHPGLSIGDVAKKLGEMWNNTAADDKHPYEKKAAKLKEKYEKDIAAYRAKGKPDAAKKGVVKAEKSKKKKEEEEDEEDEEDEEEEEDEEDEEEEEDDDDE.

Residue 1–10 (MGKGDPKKPR) participates in heparin binding. The sufficient for interaction with HAVCR2 stretch occupies residues 1–97 (MGKGDPKKPR…KFKDPNAPKR (97 aa)). N6-acetyllysine occurs at positions 3, 7, 8, and 12. The segment at 3 to 15 (KGDPKKPRGKMSS) is LPS binding (delipidated). A DNA-binding region (HMG box 1) is located at residues 9-79 (PRGKMSSYAF…RYEREMKTYI (71 aa)). The residue at position 23 (Cys23) is a Cysteine sulfonic acid (-SO3H); alternate. Cys23 and Cys45 are oxidised to a cystine. The Nuclear localization signal (NLS) 1 signature appears at 27 to 43 (HKKKHPDASVNFSEFSK). N6-acetyllysine occurs at positions 28, 29, and 30. An Isoglutamyl lysine isopeptide (Lys-Gln) (interchain with Q-?) cross-link involves residue Lys28. Ser35 bears the Phosphoserine mark. Lys43 carries the post-translational modification N6-acetyllysine. Residues Lys43 and Lys44 each participate in an isoglutamyl lysine isopeptide (Lys-Gln) (interchain with Q-?) cross-link. Cys45 is modified (cysteine sulfonic acid (-SO3H); alternate). A Phosphothreonine modification is found at Thr51. Residue Lys68 forms an Isoglutamyl lysine isopeptide (Lys-Gln) (interchain with Q-?) linkage. Positions 76-95 (KTYIPPKGETKKKFKDPNAP) are disordered. The interval 80 to 96 (PPKGETKKKFKDPNAPK) is LPS binding (Lipid A). Over residues 83-94 (GETKKKFKDPNA) the composition is skewed to basic and acidic residues. Positions 89-108 (FKDPNAPKRPPSAFFLFCSE) are cytokine-stimulating activity. N6-acetyllysine is present on Lys90. Positions 95-163 (PKRPPSAFFL…KYEKDIAAYR (69 aa)) form a DNA-binding region, HMG box 2. Phosphoserine is present on Ser100. Cys106 carries the cysteine sulfonic acid (-SO3H) modification. 7 positions are modified to N6-acetyllysine: Lys127, Lys128, Lys141, Lys172, Lys173, Lys177, and Lys180. Positions 150-183 (KLKEKYEKDIAAYRAKGKPDAAKKGVVKAEKSKK) are binding to AGER/RAGE. Over residues 162–179 (YRAKGKPDAAKKGVVKAE) the composition is skewed to basic and acidic residues. Residues 162-215 (YRAKGKPDAAKKGVVKAEKSKKKKEEEEDEEDEEDEEEEEDEEDEEEEEDDDDE) form a disordered region. The short motif at 178-184 (AEKSKKK) is the Nuclear localization signal (NLS) 2 element. An Isoglutamyl lysine isopeptide (Lys-Gln) (interchain with Q-?) cross-link involves residue Lys180. Ser181 carries the post-translational modification ADP-ribosylserine. N6-acetyllysine occurs at positions 182, 183, 184, and 185. Residues Lys182, Lys183, and Lys184 each participate in an isoglutamyl lysine isopeptide (Lys-Gln) (interchain with Q-?) cross-link. Residues 187–215 (EEEDEEDEEDEEEEEDEEDEEEEEDDDDE) show a composition bias toward acidic residues.

It belongs to the HMGB family. As to quaternary structure, interacts (fully reduced HMGB1) with CXCL12; probably in a 1:2 ratio involving two molecules of CXCL12, each interacting with one HMG box of HMGB1; inhibited by glycyrrhizin. Associates with the TLR4:LY96 receptor complex. Component of the RAG complex composed of core components RAG1 and RAG2, and associated component HMGB1 or HMGB2. Interacts (in cytoplasm upon starvation) with BECN1; inhibits the interaction of BECN1 and BCL2 leading to promotion of autophagy. Interacts with KPNA1; involved in nuclear import. Interacts with SREBF1, TLR2, TLR4, TLR9, PTPRZ1, APEX1, FEN1, POLB, TERT. Interacts with IL1B, AGER, MSH2, XPA, XPC, HNF1A, TP53. Interacts with CD24; the probable CD24:SIGLEC10 complex is proposed to inhibit HGMB1-mediated tissue damage immune response. Interacts with THBD; prevents HGMB1 interaction with ACER/RAGE and inhibits HGMB1 pro-inflammatory activity. Interacts with HAVCR2; impairs HMGB1 binding to B-DNA and likely HMGB1-mediated innate immune response. Interacts with XPO1; mediating nuclear export. Interacts with receptor RAGE/AGER. Phosphorylated at serine residues. Phosphorylation in both NLS regions is required for cytoplasmic translocation followed by secretion. Phosphorylation at Thr-51 within the NLS is crucial for secretion induced by porcine reproductive and respiratory syndrome virus (PRRSV). In terms of processing, acetylated on multiple sites upon stimulation with LPS. Acetylation on lysine residues in the nuclear localization signals (NLS 1 and NLS 2) leads to cytoplasmic localization and subsequent secretion. Acetylation on Lys-3 results in preferential binding to DNA ends and impairs DNA bending activity. Post-translationally, reduction/oxidation of cysteine residues Cys-23, Cys-45 and Cys-106 and a possible intramolecular disulfide bond involving Cys-23 and Cys-45 give rise to different redox forms with specific functional activities in various cellular compartments: 1- fully reduced HMGB1 (HMGB1C23hC45hC106h), 2- disulfide HMGB1 (HMGB1C23-C45C106h) and 3- sulfonyl HMGB1 (HMGB1C23soC45soC106so). Poly-ADP-ribosylated by PARP1 when secreted following stimulation with LPS. In terms of processing, in vitro cleavage by CASP1 is liberating a HMG box 1-containing peptide which may mediate immunogenic activity; the peptide antagonizes apoptosis-induced immune tolerance. Can be proteolytically cleaved by a thrombin:thrombomodulin complex; reduces binding to heparin and pro-inflammatory activities. Post-translationally, forms covalent cross-links mediated by transglutaminase TGM2, between a glutamine and the epsilon-amino group of a lysine residue, forming homopolymers and heteropolymers.

The protein resides in the nucleus. It is found in the chromosome. The protein localises to the cytoplasm. Its subcellular location is the secreted. It localises to the cell membrane. The protein resides in the endosome. It is found in the endoplasmic reticulum-Golgi intermediate compartment. In terms of biological role, multifunctional redox sensitive protein with various roles in different cellular compartments. In the nucleus is one of the major chromatin-associated non-histone proteins and acts as a DNA chaperone involved in replication, transcription, chromatin remodeling, V(D)J recombination, DNA repair and genome stability. Proposed to be an universal biosensor for nucleic acids. Promotes host inflammatory response to sterile and infectious signals and is involved in the coordination and integration of innate and adaptive immune responses. In the cytoplasm functions as a sensor and/or chaperone for immunogenic nucleic acids implicating the activation of TLR9-mediated immune responses, and mediates autophagy. Acts as a danger-associated molecular pattern (DAMP) molecule that amplifies immune responses during tissue injury. Released to the extracellular environment can bind DNA, nucleosomes, IL-1 beta, CXCL12, AGER isoform 2/sRAGE, lipopolysaccharide (LPS) and lipoteichoic acid (LTA), and activates cells through engagement of multiple surface receptors. In the extracellular compartment fully reduced HMGB1 (released by necrosis) acts as a chemokine, disulfide HMGB1 (actively secreted) as a cytokine, and sulfonyl HMGB1 (released from apoptotic cells) promotes immunological tolerance. Has proangiogenic activity. May be involved in platelet activation. Binds to phosphatidylserine and phosphatidylethanolamide. Bound to RAGE mediates signaling for neuronal outgrowth. May play a role in accumulation of expanded polyglutamine (polyQ) proteins. Nuclear functions are attributed to fully reduced HGMB1. Associates with chromatin and binds DNA with a preference to non-canonical DNA structures such as single-stranded DNA, DNA-containing cruciforms or bent structures, supercoiled DNA and ZDNA. Can bent DNA and enhance DNA flexibility by looping thus providing a mechanism to promote activities on various gene promoters by enhancing transcription factor binding and/or bringing distant regulatory sequences into close proximity. May be involved in nucleotide excision repair (NER), mismatch repair (MMR) and base excision repair (BER) pathways, and double strand break repair such as non-homologous end joining (NHEJ). Involved in V(D)J recombination by acting as a cofactor of the RAG complex: acts by stimulating cleavage and RAG protein binding at the 23 bp spacer of conserved recombination signal sequences (RSS). In vitro can displace histone H1 from highly bent DNA. Can restructure the canonical nucleosome leading to relaxation of structural constraints for transcription factor-binding. Enhances binding of sterol regulatory element-binding proteins (SREBPs) such as SREBF1 to their cognate DNA sequences and increases their transcriptional activities. Facilitates binding of TP53 to DNA. May be involved in mitochondrial quality control and autophagy in a transcription-dependent fashion implicating HSPB1. Can modulate the activity of the telomerase complex and may be involved in telomere maintenance. Represses porcine circovirus type 2 replication within the nucleus by binding to the Ori region of the viral genome. Functionally, in the cytoplasm proposed to dissociate the BECN1:BCL2 complex via competitive interaction with BECN1 leading to autophagy activation. Can protect BECN1 and ATG5 from calpain-mediated cleavage and thus proposed to control their proautophagic and proapoptotic functions and to regulate the extent and severity of inflammation-associated cellular injury. In myeloid cells has a protective role against endotoxemia and bacterial infection by promoting autophagy. Involved in endosomal translocation and activation of TLR9 in response to CpG-DNA in macrophages. Its function is as follows. In the extracellular compartment (following either active secretion or passive release) involved in regulation of the inflammatory response. Fully reduced HGMB1 (which subsequently gets oxidized after release) in association with CXCL12 mediates the recruitment of inflammatory cells during the initial phase of tissue injury; the CXCL12:HMGB1 complex triggers CXCR4 homodimerization. Induces the migration of monocyte-derived immature dendritic cells and seems to regulate adhesive and migratory functions of neutrophils implicating AGER/RAGE and ITGAM. Can bind to various types of DNA and RNA including microbial unmethylated CpG-DNA to enhance the innate immune response to nucleic acids. Proposed to act in promiscuous DNA/RNA sensing which cooperates with subsequent discriminative sensing by specific pattern recognition receptors. Promotes extracellular DNA-induced AIM2 inflammasome activation implicating AGER/RAGE. Disulfide HMGB1 binds to transmembrane receptors, such as AGER/RAGE, TLR2, TLR4 and probably TREM1, thus activating their signal transduction pathways. Mediates the release of cytokines/chemokines such as TNF, IL-1, IL-6, IL-8, CCL2, CCL3, CCL4 and CXCL10. Promotes secretion of interferon-gamma by macrophage-stimulated natural killer (NK) cells in concert with other cytokines like IL-2 or IL-12. TLR4 is proposed to be the primary receptor promoting macrophage activation and signaling through TLR4 seems to implicate LY96/MD-2. In bacterial LPS- or LTA-mediated inflammatory responses binds to the endotoxins and transfers them to CD14 for signaling to the respective TLR4:LY96 and TLR2 complexes. Contributes to tumor proliferation by association with ACER/RAGE. Can bind to IL1-beta and signals through the IL1R1:IL1RAP receptor complex. Binding to class A CpG activates cytokine production in plasmacytoid dendritic cells implicating TLR9, MYD88 and AGER/RAGE and can activate autoreactive B cells. Via HMGB1-containing chromatin immune complexes may also promote B cell responses to endogenous TLR9 ligands through a B-cell receptor (BCR)-dependent and ACER/RAGE-independent mechanism. Inhibits phagocytosis of apoptotic cells by macrophages; the function is dependent on poly-ADP-ribosylation and involves binding to phosphatidylserine on the cell surface of apoptotic cells. In adaptive immunity may be involved in enhancing immunity through activation of effector T cells and suppression of regulatory T (TReg) cells. In contrast, without implicating effector or regulatory T-cells, required for tumor infiltration and activation of T-cells expressing the lymphotoxin LTA:LTB heterotrimer thus promoting tumor malignant progression. Also reported to limit proliferation of T-cells. Released HMGB1:nucleosome complexes formed during apoptosis can signal through TLR2 to induce cytokine production. Involved in induction of immunological tolerance by apoptotic cells; its pro-inflammatory activities when released by apoptotic cells are neutralized by reactive oxygen species (ROS)-dependent oxidation specifically on Cys-106. During macrophage activation by activated lymphocyte-derived self apoptotic DNA (ALD-DNA) promotes recruitment of ALD-DNA to endosomes. This is High mobility group protein B1 (HMGB1) from Sus scrofa (Pig).